A 174-amino-acid polypeptide reads, in one-letter code: MPTNNHVQKEKFAEDRALLSQQNKEYAESLAKDIAKKEEKDKIRFEAEQKELRKKTIQDYREKLKGTVSQGPLRLLVRYPNGSRLILSFSPSQPMTSLFDAIILNPACPDYFSVRSVYPRAEIHCYPAWYHTIFNAEFKDETEKGANNVAKETNEVKCLETIPNNSILYVNLIQ.

A coiled-coil region spans residues 8-58 (QKEKFAEDRALLSQQNKEYAESLAKDIAKKEEKDKIRFEAEQKELRKKTIQ). The UBX domain occupies 74 to 120 (RLLVRYPNGSRLILSFSPSQPMTSLFDAIILNPACPDYFSVRSVYPR).

As to quaternary structure, forms a complex composed of deubiquitinating enzyme atx-3, adapter ubxn-5 and cdc-48.1. Interacts with atx-3 (via C-terminus). Interacts with cdc-48.1 (via N-terminus) and cdc-48.2. Specifically expressed in the germline.

Functionally, probably acts as an adapter for ATPase cdc-48.1 and/or cdc-48.2, conferring substrate specificity. Unlike other UBX domain-containing protein does not bind 'Lys-48'-polyubiquitinated chain. This is UBX domain-containing protein 5 from Caenorhabditis elegans.